Here is a 749-residue protein sequence, read N- to C-terminus: Probable serine/threonine-protein kinase fhkD (749 aa).

The 104-residue stretch at 47 to 150 (IFFGRNPKRC…NGTFVKGCIL (104 aa)) folds into the FHA domain. Over residues 84-126 (NNNNNDGDNNNNNNNNNNNNNNNNNNNNNNNNNNNNNNNNNNN) the composition is skewed to low complexity. The tract at residues 84–130 (NNNNNDGDNNNNNNNNNNNNNNNNNNNNNNNNNNNNNNNNNNNTTKN) is disordered. One can recognise a Protein kinase domain in the interval 199-472 (YSIQGILGTG…TKGALSHDWF (274 aa)). ATP is bound by residues 205–213 (LGTGNFSVV) and Lys228. Residue Asp323 is the Proton acceptor of the active site. Disordered regions lie at residues 512–620 (NIPM…PAII) and 640–749 (CTPT…LKGS). The segment covering 516-561 (TLNSTTTNTTSPNNNNNNNNNNNNKNNNKNIIKSLNSNSNNYNNNS) has biased composition (low complexity). Residues 562-572 (VLKKTSQSPKT) show a composition bias toward polar residues. Low complexity-rich tracts occupy residues 590–611 (NNNNNNNNNNNNNNNNNNNNNN) and 651–667 (TNSTTTSTATSMPTSNS). A compositionally biased stretch (polar residues) spans 668 to 687 (VTMGTSSTSIPVSNSITMKS). Basic and acidic residues predominate over residues 696–707 (DGDKKRKEKESS). Residues 708–739 (SSENVNDVIVINSNNHNNNNNNNHNINNGISS) are compositionally biased toward low complexity.

It belongs to the protein kinase superfamily. CAMK Ser/Thr protein kinase family. CHK2 subfamily.

It carries out the reaction L-seryl-[protein] + ATP = O-phospho-L-seryl-[protein] + ADP + H(+). The catalysed reaction is L-threonyl-[protein] + ATP = O-phospho-L-threonyl-[protein] + ADP + H(+). In Dictyostelium discoideum (Social amoeba), this protein is Probable serine/threonine-protein kinase fhkD (fhkD).